Reading from the N-terminus, the 440-residue chain is Putative sodium-coupled neutral amino acid transporter 8 (440 aa).

Transmembrane regions (helical) follow at residues 29–49 (AIFI…PWAF), 58–78 (AIMV…ILGY), 100–120 (IGKL…VAFL), 156–176 (FAIT…KEIS), 183–203 (ILGT…YYVM), 223–243 (MFSV…CVTI), 255–275 (WAAV…FTGI), 300–320 (VIIA…IILL), 350–370 (VVIT…VPDI), 373–393 (VISV…GLCL), and 418–438 (VVCG…EIIA).

It belongs to the amino acid/polyamine transporter 2 family.

It is found in the membrane. Putative sodium-dependent amino acid/proton antiporter. The chain is Putative sodium-coupled neutral amino acid transporter 8 (slc38a8) from Xenopus tropicalis (Western clawed frog).